The primary structure comprises 307 residues: Glutaminase (307 aa).

7 residues coordinate substrate: S66, N117, E161, N168, Y192, Y243, and V261.

Belongs to the glutaminase family. Homotetramer.

It catalyses the reaction L-glutamine + H2O = L-glutamate + NH4(+). This chain is Glutaminase, found in Serratia proteamaculans (strain 568).